Here is a 155-residue protein sequence, read N- to C-terminus: Large ribosomal subunit protein uL13 (155 aa).

It belongs to the universal ribosomal protein uL13 family. In terms of assembly, part of the 50S ribosomal subunit.

Its function is as follows. This protein is one of the early assembly proteins of the 50S ribosomal subunit, although it is not seen to bind rRNA by itself. It is important during the early stages of 50S assembly. The sequence is that of Large ribosomal subunit protein uL13 from Rickettsia typhi (strain ATCC VR-144 / Wilmington).